The sequence spans 118 residues: Eukaryotic translation initiation factor 4E-binding protein 1 (118 aa).

Polar residues-rich tracts occupy residues 1-12 and 34-48; these read MSGGSSCSQTPS and YSTT…TTPG. Disordered regions lie at residues 1-20 and 25-48; these read MSGG…ATRR and DGVQ…TTPG. The residue at position 2 (Ser2) is an N-acetylserine. Thr37 is subject to Phosphothreonine; by MTOR. Thr41 carries the post-translational modification Phosphothreonine. Position 44 is a phosphoserine (Ser44). Thr46 carries the post-translational modification Phosphothreonine; by MTOR. Residue Thr50 is modified to Phosphothreonine. Phosphotyrosine is present on Tyr54. The YXXXXLphi motif signature appears at 54 to 60; sequence YDRKFLM. Residue Lys57 forms a Glycyl lysine isopeptide (Lys-Gly) (interchain with G-Cter in ubiquitin) linkage. Residues 64 to 118 form a disordered region; the sequence is NSPVTKTPPRDLPTIPGVTSPSSDEPPMEASQSHLRNSPEDKRAGGEESQFEMDI. At Ser65 the chain carries Phosphoserine; by DYRK2, MAPK1, MAPK3 and MTOR. Phosphothreonine; by MTOR is present on Thr70. Residue Thr77 is modified to Phosphothreonine. A phosphoserine mark is found at Ser83 and Ser96. Basic and acidic residues predominate over residues 100-109; sequence NSPEDKRAGG. Ser101 is modified (phosphoserine; by DYRK2). Position 112 is a phosphoserine (Ser112). The TOS motif signature appears at 114 to 118; it reads FEMDI.

The protein belongs to the eIF4E-binding protein family. As to quaternary structure, hypophosphorylated EIF4EBP1 competes with EIF4G1/EIF4G3 to interact with EIF4E; insulin stimulated MAP-kinase (MAPK1 and MAPK3) or mTORC1 phosphorylation of EIF4EBP1 causes dissociation of the complex allowing EIF4G1/EIF4G3 to bind and consequent initiation of translation. Interacts (via TOS motif) with RPTOR; promoting phosphorylation by mTORC1. Phosphorylated on serine and threonine residues in response to insulin, EGF and PDGF. Phosphorylation at Thr-37, Thr-46, Ser-65 and Thr-70, corresponding to the hyperphosphorylated form, is regulated by mTORC1 and abolishes binding to EIF4E. In terms of processing, ubiquitinated: when eIF4E levels are low, hypophosphorylated form is ubiquitinated by the BCR(KLHL25) complex, leading to its degradation and serving as a homeostatic mechanism to maintain translation and prevent eIF4E inhibition when eIF4E levels are low. Not ubiquitinated when hyperphosphorylated (at Thr-37, Thr-46, Ser-65 and Thr-70) or associated with eIF4E.

It localises to the cytoplasm. The protein localises to the nucleus. Repressor of translation initiation that regulates EIF4E activity by preventing its assembly into the eIF4F complex: hypophosphorylated form competes with EIF4G1/EIF4G3 and strongly binds to EIF4E, leading to repress translation. In contrast, hyperphosphorylated form dissociates from EIF4E, allowing interaction between EIF4G1/EIF4G3 and EIF4E, leading to initiation of translation. Mediates the regulation of protein translation by hormones, growth factors and other stimuli that signal through the MAP kinase and mTORC1 pathways. This chain is Eukaryotic translation initiation factor 4E-binding protein 1 (EIF4EBP1), found in Homo sapiens (Human).